Consider the following 338-residue polypeptide: uncharacterized protein (338 aa).

The chain crosses the membrane as a helical span at residues 20–40; it reads IFFTLTFSLSNLFLAICYLFL.

It localises to the membrane. This is an uncharacterized protein from Schizosaccharomyces pombe (strain 972 / ATCC 24843) (Fission yeast).